We begin with the raw amino-acid sequence, 565 residues long: NAD-dependent malic enzyme (565 aa).

Tyr104 acts as the Proton donor in catalysis. Arg157 is an NAD(+) binding site. Lys175 functions as the Proton acceptor in the catalytic mechanism. Positions 246, 247, and 270 each coordinate a divalent metal cation. The NAD(+) site is built by Asp270 and Asn418.

Belongs to the malic enzymes family. Homotetramer. Mg(2+) serves as cofactor. Mn(2+) is required as a cofactor.

The enzyme catalyses (S)-malate + NAD(+) = pyruvate + CO2 + NADH. It carries out the reaction oxaloacetate + H(+) = pyruvate + CO2. The polypeptide is NAD-dependent malic enzyme (Shigella sonnei (strain Ss046)).